Consider the following 322-residue polypeptide: Triosephosphate isomerase, chloroplastic (322 aa).

The N-terminal 67 residues, 1–67, are a transit peptide targeting the chloroplast; sequence MAVVSTSLAS…RRCPRGVVAM (67 aa). Asn78 and Lys80 together coordinate substrate. His162 functions as the Electrophile in the catalytic mechanism. Residue Glu232 is the Proton acceptor of the active site.

Belongs to the triosephosphate isomerase family. Homodimer.

The protein resides in the plastid. The protein localises to the chloroplast. It carries out the reaction D-glyceraldehyde 3-phosphate = dihydroxyacetone phosphate. It functions in the pathway carbohydrate biosynthesis; Calvin cycle. In Spinacia oleracea (Spinach), this protein is Triosephosphate isomerase, chloroplastic (TPIP1).